Here is a 118-residue protein sequence, read N- to C-terminus: Small ribosomal subunit protein uS13 (118 aa).

Residues 94-118 are disordered; it reads SLPLRGQRTKTNARTRKGPRKPIRK.

Belongs to the universal ribosomal protein uS13 family. Part of the 30S ribosomal subunit. Forms a loose heterodimer with protein S19. Forms two bridges to the 50S subunit in the 70S ribosome.

Located at the top of the head of the 30S subunit, it contacts several helices of the 16S rRNA. In the 70S ribosome it contacts the 23S rRNA (bridge B1a) and protein L5 of the 50S subunit (bridge B1b), connecting the 2 subunits; these bridges are implicated in subunit movement. Contacts the tRNAs in the A and P-sites. This is Small ribosomal subunit protein uS13 from Shewanella frigidimarina (strain NCIMB 400).